Consider the following 316-residue polypeptide: Acetyl-coenzyme A carboxylase carboxyl transferase subunit alpha (316 aa).

The CoA carboxyltransferase C-terminal domain maps to 36-290; that stretch reads PLRTQLETLR…GSVISRHLDD (255 aa).

Belongs to the AccA family. As to quaternary structure, acetyl-CoA carboxylase is a heterohexamer composed of biotin carboxyl carrier protein (AccB), biotin carboxylase (AccC) and two subunits each of ACCase subunit alpha (AccA) and ACCase subunit beta (AccD).

The protein localises to the cytoplasm. The catalysed reaction is N(6)-carboxybiotinyl-L-lysyl-[protein] + acetyl-CoA = N(6)-biotinyl-L-lysyl-[protein] + malonyl-CoA. Its pathway is lipid metabolism; malonyl-CoA biosynthesis; malonyl-CoA from acetyl-CoA: step 1/1. Its function is as follows. Component of the acetyl coenzyme A carboxylase (ACC) complex. First, biotin carboxylase catalyzes the carboxylation of biotin on its carrier protein (BCCP) and then the CO(2) group is transferred by the carboxyltransferase to acetyl-CoA to form malonyl-CoA. This chain is Acetyl-coenzyme A carboxylase carboxyl transferase subunit alpha, found in Deinococcus radiodurans (strain ATCC 13939 / DSM 20539 / JCM 16871 / CCUG 27074 / LMG 4051 / NBRC 15346 / NCIMB 9279 / VKM B-1422 / R1).